We begin with the raw amino-acid sequence, 79 residues long: Sulfur carrier protein TusA (79 aa).

Cys17 (cysteine persulfide intermediate) is an active-site residue.

The protein belongs to the sulfur carrier protein TusA family.

The protein localises to the cytoplasm. Functionally, sulfur carrier protein which probably makes part of a sulfur-relay system. The sequence is that of Sulfur carrier protein TusA from Mannheimia succiniciproducens (strain KCTC 0769BP / MBEL55E).